Consider the following 627-residue polypeptide: Membrane protein insertase YidC (627 aa).

6 helical membrane passes run 3-23 (KNTV…SWLN), 376-396 (WGLI…PLAY), 450-470 (LPML…PTTI), 502-522 (FYGN…ILYI), 534-554 (EGMA…LFFF), and 558-578 (ASGL…QYMS).

This sequence belongs to the OXA1/ALB3/YidC family. Type 1 subfamily. Interacts with the Sec translocase complex via SecD. Specifically interacts with transmembrane segments of nascent integral membrane proteins during membrane integration.

It is found in the cell inner membrane. Required for the insertion and/or proper folding and/or complex formation of integral membrane proteins into the membrane. Involved in integration of membrane proteins that insert both dependently and independently of the Sec translocase complex, as well as at least some lipoproteins. Aids folding of multispanning membrane proteins. This is Membrane protein insertase YidC from Porphyromonas gingivalis (strain ATCC BAA-308 / W83).